Here is a 414-residue protein sequence, read N- to C-terminus: uncharacterized protein (414 aa).

A helical transmembrane segment spans residues 367–384; it reads TTWALTLICIACILLFFV.

It is found in the virion membrane. This is an uncharacterized protein from Human cytomegalovirus (strain Merlin) (HHV-5).